The sequence spans 779 residues: Endonuclease MutS2 (779 aa).

328–335 (GPNTGGKT) contacts ATP. In terms of domain architecture, Smr spans 704–779 (LDLRGKRYEE…GSGATIVTLG (76 aa)).

It belongs to the DNA mismatch repair MutS family. MutS2 subfamily. In terms of assembly, homodimer. Binds to stalled ribosomes, contacting rRNA.

In terms of biological role, endonuclease that is involved in the suppression of homologous recombination and thus may have a key role in the control of bacterial genetic diversity. Its function is as follows. Acts as a ribosome collision sensor, splitting the ribosome into its 2 subunits. Detects stalled/collided 70S ribosomes which it binds and splits by an ATP-hydrolysis driven conformational change. Acts upstream of the ribosome quality control system (RQC), a ribosome-associated complex that mediates the extraction of incompletely synthesized nascent chains from stalled ribosomes and their subsequent degradation. Probably generates substrates for RQC. The protein is Endonuclease MutS2 of Streptococcus pyogenes serotype M18 (strain MGAS8232).